A 670-amino-acid polypeptide reads, in one-letter code: Probable potassium transport system protein Kup 1 (670 aa).

13 helical membrane-spanning segments follow: residues 14–34 (GAGF…SPLY), 58–78 (LSLI…WIAL), 101–121 (WLII…ALTP), 147–167 (LPIV…QRFG), 175–195 (FGPV…INLF), 196–216 (GDFS…LLSP), 220–240 (AGIF…ALYS), 252–272 (VSWP…GAWL), 294–314 (LIIF…QALI), 345–365 (LYIP…VVYF), 374–394 (AYGL…TVYL), 403–423 (VLVG…FAAS), and 427–447 (FMHG…VMAI).

This sequence belongs to the HAK/KUP transporter (TC 2.A.72) family.

The protein resides in the cell membrane. The catalysed reaction is K(+)(in) + H(+)(in) = K(+)(out) + H(+)(out). Functionally, transport of potassium into the cell. Likely operates as a K(+):H(+) symporter. The sequence is that of Probable potassium transport system protein Kup 1 from Lactococcus lactis subsp. lactis (strain IL1403) (Streptococcus lactis).